We begin with the raw amino-acid sequence, 841 residues long: DNA mismatch repair protein MutS (841 aa).

596–603 (GPNMSGKS) lines the ATP pocket.

This sequence belongs to the DNA mismatch repair MutS family.

This protein is involved in the repair of mismatches in DNA. It is possible that it carries out the mismatch recognition step. This protein has a weak ATPase activity. This is DNA mismatch repair protein MutS from Acholeplasma laidlawii (strain PG-8A).